A 146-amino-acid polypeptide reads, in one-letter code: Oxygen-independent coproporphyrinogen III oxidase (146 aa).

S-adenosyl-L-methionine is bound at residue Y54. C60 and C64 together coordinate [4Fe-4S] cluster. F66 serves as a coordination point for S-adenosyl-L-methionine. C67 is a [4Fe-4S] cluster binding site. S-adenosyl-L-methionine-binding positions include 111–112 (GT) and E143.

Belongs to the anaerobic coproporphyrinogen-III oxidase family. Monomer. The cofactor is [4Fe-4S] cluster.

Its subcellular location is the cytoplasm. The catalysed reaction is coproporphyrinogen III + 2 S-adenosyl-L-methionine = protoporphyrinogen IX + 2 5'-deoxyadenosine + 2 L-methionine + 2 CO2. It functions in the pathway porphyrin-containing compound metabolism; protoporphyrin-IX biosynthesis; protoporphyrinogen-IX from coproporphyrinogen-III (AdoMet route): step 1/1. Its function is as follows. Involved in the heme biosynthesis. Catalyzes the anaerobic oxidative decarboxylation of propionate groups of rings A and B of coproporphyrinogen III to yield the vinyl groups in protoporphyrinogen IX. The polypeptide is Oxygen-independent coproporphyrinogen III oxidase (hemN) (Mannheimia haemolytica (Pasteurella haemolytica)).